A 168-amino-acid chain; its full sequence is 3'-5' exoribonuclease MT2234.1 (168 aa).

Aspartate 6 is a Mg(2+) binding site. Residues 6-9 form an RNA binding region; the sequence is DTEF.

In terms of assembly, homodimer. Mg(2+) serves as cofactor.

Its function is as follows. Exonuclease that cleaves single-stranded 3' overhangs of double-stranded RNA. This Mycobacterium tuberculosis (strain CDC 1551 / Oshkosh) protein is 3'-5' exoribonuclease MT2234.1.